The primary structure comprises 177 residues: Large ribosomal subunit protein uL6 (177 aa).

Belongs to the universal ribosomal protein uL6 family. As to quaternary structure, part of the 50S ribosomal subunit.

In terms of biological role, this protein binds to the 23S rRNA, and is important in its secondary structure. It is located near the subunit interface in the base of the L7/L12 stalk, and near the tRNA binding site of the peptidyltransferase center. In Enterobacter sp. (strain 638), this protein is Large ribosomal subunit protein uL6.